We begin with the raw amino-acid sequence, 265 residues long: Protein synthesis inhibitor PD-S2 (265 aa).

Disulfide bonds link cysteine 34–cysteine 262 and cysteine 88–cysteine 110. Residue asparagine 120 is glycosylated (N-linked (GlcNAc...) asparagine).

The protein belongs to the ribosome-inactivating protein family. Type 1 RIP subfamily. In terms of processing, glycosylated. As to expression, seeds.

It carries out the reaction Endohydrolysis of the N-glycosidic bond at one specific adenosine on the 28S rRNA.. In terms of biological role, inhibits protein synthesis in animal cells. Useful as immunotoxin for pharmacological applications. This is Protein synthesis inhibitor PD-S2 from Phytolacca dioica (Bella sombra tree).